Consider the following 181-residue polypeptide: Regulator of G-protein signaling 5 (181 aa).

One can recognise an RGS domain in the interval 64–180; sequence SLDKLLQSNY…VRSEFYKELI (117 aa).

It is found in the cytoplasm. The protein resides in the membrane. Its function is as follows. Inhibits signal transduction by increasing the GTPase activity of G protein alpha subunits thereby driving them into their inactive GDP-bound form. Binds to G(i)-alpha and G(o)-alpha, but not to G(s)-alpha. The protein is Regulator of G-protein signaling 5 (Rgs5) of Rattus norvegicus (Rat).